Reading from the N-terminus, the 623-residue chain is Oviduct-specific glycoprotein (623 aa).

The signal sequence occupies residues 1 to 21 (MWKLLLWVGLVLVLKHHDGAA). The GH18 domain maps to 22–385 (HKLVCYFTNW…YVMNDILVRA (364 aa)). Residues Cys26 and Cys51 are joined by a disulfide bond. Residues 71 to 72 (LQ), 98 to 101 (GGWN), Tyr142, 211 to 214 (LSYD), and Trp355 contribute to the chitin site. 2 N-linked (GlcNAc...) asparagine glycosylation sites follow: Asn402 and Asn441. Disordered regions lie at residues 539 to 558 (LTPVGHPSVTPVSHQSVSPG) and 594 to 623 (RKISVTPEGQTVPLRGEYLTSETGTHPQDG). The span at 613–623 (TSETGTHPQDG) shows a compositional bias: polar residues.

The protein belongs to the glycosyl hydrolase 18 family. In terms of tissue distribution, oviduct.

The protein resides in the cytoplasmic vesicle. It localises to the secretory vesicle. Functionally, binds to oocyte zona pellucida in vivo. May play a role in the fertilization process and/or early embryonic development. In Papio anubis (Olive baboon), this protein is Oviduct-specific glycoprotein (OVGP1).